A 62-amino-acid chain; its full sequence is uncharacterized protein (62 aa).

This is an uncharacterized protein from Sinorhizobium fredii (strain NBRC 101917 / NGR234).